The sequence spans 203 residues: Cytochrome c biogenesis CcmF N-terminal-like mitochondrial protein 2 (203 aa).

Transmembrane regions (helical) follow at residues 44–64 (IWILTCWWFLTVGILLGSWWA) and 143–163 (IFLWWFFLLMTGISMILFYQM).

The protein belongs to the CcmF/CycK/Ccl1/NrfE/CcsA family. Interacts with CCMFC, CCMFN1, CCMH and CYTC-1.

It localises to the mitochondrion inner membrane. Functionally, forms a complex with CCMFC, CCMFN1 and CCMH that performs the assembly of heme with c-type apocytochromes in mitochondria. The sequence is that of Cytochrome c biogenesis CcmF N-terminal-like mitochondrial protein 2 from Arabidopsis thaliana (Mouse-ear cress).